The following is a 629-amino-acid chain: Dehydrogenase pyvF (629 aa).

Residues 1 to 22 (MAGSPFTTALLSAWTLSTVAVG) form the signal peptide. FAD contacts are provided by residues 61–62 (AS) and 82–83 (EA). N-linked (GlcNAc...) asparagine glycosylation occurs at N92. 144-147 (NLMA) lines the FAD pocket. N-linked (GlcNAc...) asparagine glycosylation is found at N172, N182, N256, N284, N312, and N421. The Proton acceptor role is filled by H552. FAD contacts are provided by residues A586 and 597 to 598 (PL).

Belongs to the GMC oxidoreductase family. Homodimer. The cofactor is FAD.

The protein operates within secondary metabolite biosynthesis. Its function is as follows. Dehydrogenase; part of the gene cluster that mediates the biosynthesis of pyranoviolin A, a pyranonigrin analog with a C-3 methoxy group. Initially, the PKS portion of pyvA synthesizes C-10 carbon chain from 5 molecules of malonyl-CoA, which is then condensed with the thiolation (T) domain-bound glycine activated by the adenylation (A) domain. The subsequent chain release by Dieckmann condensation (DKC) could be catalyzed by the TE domain present at the C-terminus of pyvA and/or the alpha/beta hydrolase pyvD, installing the tetramic acid moiety. The FAD-dependent monooxygenase pyvC next epoxidizes one of the olefins of the polyketide part, and the epoxide ring-opening induces the dihydro-gamma-pyrone ring formation. The cytochrome P450 monooxygeanse pyvB would be responsible for the 2 consecutive reactions, in which the dihydro-gamma-pyrone is oxidized to gamma-pyrone and C-7 is hydroxylated to yield pyranonigrin F. Finally, the O-methyltransferase pyvH methylates the C-3 hydroxy group to complete the biosynthesis. The chain is Dehydrogenase pyvF from Aspergillus violaceofuscus (strain CBS 115571).